A 214-amino-acid polypeptide reads, in one-letter code: Pyrrolidone-carboxylate peptidase (214 aa).

Catalysis depends on residues glutamate 80, cysteine 143, and histidine 166.

The protein belongs to the peptidase C15 family. As to quaternary structure, homotetramer.

The protein localises to the cytoplasm. The catalysed reaction is Release of an N-terminal pyroglutamyl group from a polypeptide, the second amino acid generally not being Pro.. Removes 5-oxoproline from various penultimate amino acid residues except L-proline. The polypeptide is Pyrrolidone-carboxylate peptidase (Escherichia fergusonii (strain ATCC 35469 / DSM 13698 / CCUG 18766 / IAM 14443 / JCM 21226 / LMG 7866 / NBRC 102419 / NCTC 12128 / CDC 0568-73)).